The primary structure comprises 332 residues: 2-hydroxyacid dehydrogenase homolog 1 (332 aa).

NAD(+)-binding positions include 154-155 (RI), 233-235 (TSR), and Asp259. The active site involves Arg235. Glu264 is a catalytic residue. His296 serves as the catalytic Proton donor. An NAD(+)-binding site is contributed by 296-299 (HQAF).

Belongs to the D-isomer specific 2-hydroxyacid dehydrogenase family.

The protein localises to the cytoplasm. The protein resides in the nucleus. This chain is 2-hydroxyacid dehydrogenase homolog 1, found in Schizosaccharomyces pombe (strain 972 / ATCC 24843) (Fission yeast).